The sequence spans 51 residues: uncharacterized protein (51 aa).

The chain crosses the membrane as a helical span at residues 20–42 (NFFSRMWNAVVFGFGAAIGASVA).

The protein resides in the membrane. This is an uncharacterized protein from Schizosaccharomyces pombe (strain 972 / ATCC 24843) (Fission yeast).